A 414-amino-acid chain; its full sequence is Serine hydroxymethyltransferase (414 aa).

(6S)-5,6,7,8-tetrahydrofolate-binding positions include L117 and 121–123 (GHL). Position 226 is an N6-(pyridoxal phosphate)lysine (K226).

The protein belongs to the SHMT family. In terms of assembly, homodimer. Requires pyridoxal 5'-phosphate as cofactor.

It localises to the cytoplasm. It catalyses the reaction (6R)-5,10-methylene-5,6,7,8-tetrahydrofolate + glycine + H2O = (6S)-5,6,7,8-tetrahydrofolate + L-serine. The protein operates within one-carbon metabolism; tetrahydrofolate interconversion. Its pathway is amino-acid biosynthesis; glycine biosynthesis; glycine from L-serine: step 1/1. In terms of biological role, catalyzes the reversible interconversion of serine and glycine with tetrahydrofolate (THF) serving as the one-carbon carrier. This reaction serves as the major source of one-carbon groups required for the biosynthesis of purines, thymidylate, methionine, and other important biomolecules. Also exhibits THF-independent aldolase activity toward beta-hydroxyamino acids, producing glycine and aldehydes, via a retro-aldol mechanism. The protein is Serine hydroxymethyltransferase of Dictyoglomus thermophilum (strain ATCC 35947 / DSM 3960 / H-6-12).